We begin with the raw amino-acid sequence, 295 residues long: DegV domain-containing protein MG326 (295 aa).

The 289-residue stretch at 4–292 (TAIITDSTAS…IDAFSISLLI (289 aa)) folds into the DegV domain. Threonine 63 and serine 95 together coordinate hexadecanoate.

Functionally, may bind long-chain fatty acids, such as palmitate, and may play a role in lipid transport or fatty acid metabolism. The polypeptide is DegV domain-containing protein MG326 (Mycoplasma genitalium (strain ATCC 33530 / DSM 19775 / NCTC 10195 / G37) (Mycoplasmoides genitalium)).